A 202-amino-acid polypeptide reads, in one-letter code: Small ribosomal subunit protein uS4 (202 aa).

The S4 RNA-binding domain maps to 91 to 154; it reads SMLSSVLYNS…VNLPSVLAAI (64 aa).

Belongs to the universal ribosomal protein uS4 family. Part of the 30S ribosomal subunit. Contacts protein S5. The interaction surface between S4 and S5 is involved in control of translational fidelity.

Functionally, one of the primary rRNA binding proteins, it binds directly to 16S rRNA where it nucleates assembly of the body of the 30S subunit. In terms of biological role, with S5 and S12 plays an important role in translational accuracy. This Ehrlichia ruminantium (strain Gardel) protein is Small ribosomal subunit protein uS4.